Reading from the N-terminus, the 613-residue chain is Protein CER1-like 2 (613 aa).

6 helical membrane passes run 13–33, 44–64, 95–115, 122–142, 182–202, and 322–342; these read WTPL…DSIY, LLIV…ISLS, IIFN…TSTI, GVIL…YWFH, LILG…VVSI, and YLFL…SFSF. Residues 134–268 enclose the Fatty acid hydroxylase domain; sequence VEFIYYWFHR…MPMYDYIYGT (135 aa).

The protein belongs to the sterol desaturase family. In terms of tissue distribution, not detected in any tissues.

The protein resides in the membrane. This chain is Protein CER1-like 2, found in Arabidopsis thaliana (Mouse-ear cress).